A 253-amino-acid chain; its full sequence is Triosephosphate isomerase (253 aa).

A substrate-binding site is contributed by 8-10 (NWK). The active-site Electrophile is the His93. The Proton acceptor role is filled by Glu165. Substrate is bound by residues Gly171, Ser210, and 231–232 (GG).

This sequence belongs to the triosephosphate isomerase family. Homodimer.

It localises to the cytoplasm. The enzyme catalyses D-glyceraldehyde 3-phosphate = dihydroxyacetone phosphate. The protein operates within carbohydrate biosynthesis; gluconeogenesis. It participates in carbohydrate degradation; glycolysis; D-glyceraldehyde 3-phosphate from glycerone phosphate: step 1/1. Functionally, involved in the gluconeogenesis. Catalyzes stereospecifically the conversion of dihydroxyacetone phosphate (DHAP) to D-glyceraldehyde-3-phosphate (G3P). This Francisella tularensis subsp. tularensis (strain FSC 198) protein is Triosephosphate isomerase.